Here is a 196-residue protein sequence, read N- to C-terminus: Cupin-domain-containing oxidoreductase srdD (196 aa).

Residues 99–165 (DFGPGVESPL…GNGTLPGRVM (67 aa)) are cupin-like domain.

Belongs to the virC family.

Highly reducing polyketide synthase; part of the gene cluster that mediates the biosynthesis of sordarial, a salicylic aldehyde structurally related to the phytotoxin pyriculol. The most interesting aspect of this pathway is formation of an aromatic product from the highly reducing polyketide synthase srdA. SrdA synthesizes a reduced polyketide chain from one molecule of acetyl-CoA and five molecules of malonyl-CoA. The polyketide chain is then reductively released as an aldehyde. The oxidoreductases srdC, srdD and srdE then oxidize one of the hydroxy groups to facilitate the intramolecular aldol condensation, followed by dehydration to yield a salicylic aldehyde. This aldehyde can undergo facile reduction by endogenous reductases to yield the alcohol 1-hydroxy-2-hydroxymethyl-3-pent-1,3-dienylbenzene. The flavin-dependent srdI counteract against the propensity of the aldehydes to be reduced under physiological conditions and is responsible for reoxidizing 1-hydroxy-2-hydroxymethyl-3-pent-1,3-dienylbenzene back to the salicylic aldehyde. This salicylic aldehyde is then selectively epoxidized by the cupin-domain-containing oxidoreductase srdB to yield the epoxide, which can be hydrolyzed stereoselectively by the hydrolase srdG to give the final product sordarial. This Neurospora crassa (strain ATCC 24698 / 74-OR23-1A / CBS 708.71 / DSM 1257 / FGSC 987) protein is Cupin-domain-containing oxidoreductase srdD.